Consider the following 60-residue polypeptide: Ribosome-inactivating protein dianthin-32 (60 aa).

The protein belongs to the ribosome-inactivating protein family. Type 1 RIP subfamily.

The enzyme catalyses Endohydrolysis of the N-glycosidic bond at one specific adenosine on the 28S rRNA.. In terms of biological role, single-chain ribosome-inactivating protein. The protein is Ribosome-inactivating protein dianthin-32 of Dianthus caryophyllus (Carnation).